The chain runs to 305 residues: Methionyl-tRNA formyltransferase (305 aa).

110 to 113 (SLLP) contributes to the (6S)-5,6,7,8-tetrahydrofolate binding site.

It belongs to the Fmt family.

The catalysed reaction is L-methionyl-tRNA(fMet) + (6R)-10-formyltetrahydrofolate = N-formyl-L-methionyl-tRNA(fMet) + (6S)-5,6,7,8-tetrahydrofolate + H(+). Its function is as follows. Attaches a formyl group to the free amino group of methionyl-tRNA(fMet). The formyl group appears to play a dual role in the initiator identity of N-formylmethionyl-tRNA by promoting its recognition by IF2 and preventing the misappropriation of this tRNA by the elongation apparatus. The polypeptide is Methionyl-tRNA formyltransferase (Ureaplasma parvum serovar 3 (strain ATCC 700970)).